The sequence spans 519 residues: Phosphate acetyltransferase (519 aa).

The phosphate acetyltransferase stretch occupies residues A196 to Y519.

In the N-terminal section; belongs to the CobB/CobQ family. This sequence in the C-terminal section; belongs to the phosphate acetyltransferase and butyryltransferase family.

It is found in the cytoplasm. It carries out the reaction acetyl-CoA + phosphate = acetyl phosphate + CoA. It participates in metabolic intermediate biosynthesis; acetyl-CoA biosynthesis; acetyl-CoA from acetate: step 2/2. This is Phosphate acetyltransferase (pta) from Helicobacter pylori (strain J99 / ATCC 700824) (Campylobacter pylori J99).